Here is a 598-residue protein sequence, read N- to C-terminus: Elongation factor 4 (598 aa).

A tr-type G domain is found at 2–184 (KNIRNFSIIA…EIVHKIPAPE (183 aa)). GTP-binding positions include 14–19 (DHGKST) and 131–134 (NKID).

This sequence belongs to the TRAFAC class translation factor GTPase superfamily. Classic translation factor GTPase family. LepA subfamily.

It is found in the cell inner membrane. The catalysed reaction is GTP + H2O = GDP + phosphate + H(+). Its function is as follows. Required for accurate and efficient protein synthesis under certain stress conditions. May act as a fidelity factor of the translation reaction, by catalyzing a one-codon backward translocation of tRNAs on improperly translocated ribosomes. Back-translocation proceeds from a post-translocation (POST) complex to a pre-translocation (PRE) complex, thus giving elongation factor G a second chance to translocate the tRNAs correctly. Binds to ribosomes in a GTP-dependent manner. The protein is Elongation factor 4 of Pasteurella multocida (strain Pm70).